Consider the following 166-residue polypeptide: Photosystem I assembly protein Ycf3 (166 aa).

TPR repeat units lie at residues 35 to 68 (AFVYYRDGMSAQAEGEYAEALQNYAQAMRLEVDP), 72 to 105 (SFIFYNIGLIHTSNGEHTKALEYYYQALDRNPSL), and 120 to 153 (GEQALAAGNIPDSETLFEKAAEYWKEAIRLAPLN).

This sequence belongs to the Ycf3 family.

It localises to the plastid. The protein resides in the chloroplast thylakoid membrane. In terms of biological role, essential for the assembly of the photosystem I (PSI) complex. May act as a chaperone-like factor to guide the assembly of the PSI subunits. The chain is Photosystem I assembly protein Ycf3 from Ostreococcus tauri.